A 328-amino-acid polypeptide reads, in one-letter code: UPF0194 membrane protein YPTS_1292 (328 aa).

Residues 1–22 form the signal peptide; the sequence is MNRKKIIVAAVIVALLATLAYG. Coiled coils occupy residues 80-109 and 142-209; these read YLNA…REEE and AVSA…ILLA.

The protein belongs to the UPF0194 family.

The protein resides in the periplasm. This is UPF0194 membrane protein YPTS_1292 from Yersinia pseudotuberculosis serotype IB (strain PB1/+).